Here is a 549-residue protein sequence, read N- to C-terminus: Cation/acetate symporter ActP (549 aa).

Helical transmembrane passes span 33 to 53, 77 to 97, 103 to 123, 148 to 168, 183 to 203, 206 to 226, 262 to 282, 303 to 323, 355 to 375, 404 to 424, 428 to 448, 464 to 484, and 493 to 513; these read WQAIIMFLIFVVFTLGITYWA, LAIAGDYMSAASFLGISALVF, GLIYSLGFLVGWPIILFLIAE, ILSACGSLVVVALYLIAQMVG, IAVVLVGVLMMMYVLFGGMLA, WVQIIKAVLLLFGASFMAFMV, ISALSLGLGLMFGTAGLPHIL, GFMGYFYILTFIIGFGAIMLV, LFLGFISAVAFATILAVVAGL, VSKITVLILGVIAIILGVLFE, IAFMVGLAFAIAASCNFPIIL, GGWLGLITAVVLMILGPTIWV, and IFPYEYPALFSISVAFLGIWL.

This sequence belongs to the sodium:solute symporter (SSF) (TC 2.A.21) family.

Its subcellular location is the cell inner membrane. Functionally, transports acetate. This is Cation/acetate symporter ActP from Escherichia coli O1:K1 / APEC.